Here is a 195-residue protein sequence, read N- to C-terminus: Peptidyl-tRNA hydrolase (195 aa).

Tyr18 lines the tRNA pocket. His23 (proton acceptor) is an active-site residue. TRNA contacts are provided by Phe69, Asn71, and Asn117.

The protein belongs to the PTH family. As to quaternary structure, monomer.

The protein localises to the cytoplasm. It catalyses the reaction an N-acyl-L-alpha-aminoacyl-tRNA + H2O = an N-acyl-L-amino acid + a tRNA + H(+). In terms of biological role, hydrolyzes ribosome-free peptidyl-tRNAs (with 1 or more amino acids incorporated), which drop off the ribosome during protein synthesis, or as a result of ribosome stalling. Functionally, catalyzes the release of premature peptidyl moieties from peptidyl-tRNA molecules trapped in stalled 50S ribosomal subunits, and thus maintains levels of free tRNAs and 50S ribosomes. This Alcanivorax borkumensis (strain ATCC 700651 / DSM 11573 / NCIMB 13689 / SK2) protein is Peptidyl-tRNA hydrolase.